Reading from the N-terminus, the 550-residue chain is Chaperonin GroEL (550 aa).

ATP is bound by residues 30–33, lysine 51, 87–91, glycine 415, and aspartate 495; these read TLGP and DGTTT.

This sequence belongs to the chaperonin (HSP60) family. In terms of assembly, forms a cylinder of 14 subunits composed of two heptameric rings stacked back-to-back. Interacts with the co-chaperonin GroES.

The protein resides in the cytoplasm. The enzyme catalyses ATP + H2O + a folded polypeptide = ADP + phosphate + an unfolded polypeptide.. Functionally, together with its co-chaperonin GroES, plays an essential role in assisting protein folding. The GroEL-GroES system forms a nano-cage that allows encapsulation of the non-native substrate proteins and provides a physical environment optimized to promote and accelerate protein folding. This chain is Chaperonin GroEL, found in Dechloromonas aromatica (strain RCB).